The sequence spans 1693 residues: MFKWVTPASTATLSRCTLPATTAATTTTTAMAATRTATTTTRTTRPQLLSIALTSLIIIVASFVPTTSGFRSIETNGGGRKLFGGYRITPKHCRATKTLPSSDPRANGPTICMFNHECAQRGGEVVGACMDGFLFGACCQIPPTHELASTLINEAQNAYFQQHQQQTKLQQSAAQSSFESYGEQQQSLSEEQVAQQPSQNIYDQQNLDKVYQQLDSSSSISPPNGAYGDEPQQQEYQSESEQPVRDENAYPTSSSSTEATQSQSSSASVEFEQEPSQPADASNDQTTQKINKQPVQPPNFHVHKHSVTINSPSSPPQNDDFVMQVLSTLPPEHADDHHIVFTTEVPTKITSGLQDQTSSESNSFEEVSSTPAATQKPKPKPTQMPTQKTTQKATQKPTPKPTQKAKPKPVPQLAESMKRPIQQKPQQVAKPKPSPKPAQSTNNHHHNHLILDGGEFTHSDITHPGADADLVEDLQFSTGYGPQPVYAEPPKQQQQQQPAEQSYISSSTSAKRPTTGHNSPTTVSSITTHVDSIESIILQLNNTSHGPSYNVVSQQTPSYGYPGAAVVQTEPAAQNPTFYQENESEKVQESDSQSDYGYTTTVNYESFYDKVSDEQDASAAVSQSAEMPTARPGYGEDVSAVLEDHTMPANGYHDAEAPVAPQTSEFNKMPVMGIAYPVDMSYMEEEGNLPATAAGYGQMSSDSYEASTESTYQKLSTVQTEEPQPTYVRPTTNANKQNRPVASYIGMVTMQHYNPQPGNGDYQAQVPPEVSVSSHTTKVQEQMDETSNGYQQSETTSGYVSPPTAVPAPAQRPQYDAVQGDASSERPVLVTASPRPRPKPSTKRPAVKRPISGESTKKKPQPQPSAGAYNQEKISEHSTRKPVSNGYDKVPESPITHIQIKKPSATQHKEQEQTGYPRPASPAGYEQTTAAAPAPAAPSLNYDKPDAPPSQYDQPSAPSASYDQLAPMPSLNYNEQHASSPGRKPSTAKPISTSYVTGPSTPRPPATVDYHYDNVPPLFMADDKLDAFIQSTAENIVGSTPGNYQPPLVATASTPAYAHRPTSSGSYGHKKPGFVQINGTPKPPRPTVLITPKPTAINLVTYSSLSDDSNKLASSTSSYVTGRPGVQGVSSNDFKDPGYFGSSPVHVAFTQSTTEAVYAVPSDDKPAFPGYFGPTPSYPAFSVPGEKVGQNVMEETYTSPNDFVNFPPVRNPNLNMSAASSAVTSDLDLSTPAFVEDVVLKDKMHTLVHKLVASLQGNFEALADMIEEPGSNKTVATYQAGAGGTAKPVRVVTTRKPVRTATTTRPKVTTKKPVTRVTTKAPNKKTSAVSTTTRKPATRRTTVAAKVTTTTRRPATKKPTRRVSSTVKTTTVSSARPADDEIVDEEDEEDVNPNPSDNEIDQGATLSSYGGANGRKIHSTSRTLPTPNLAFHSPSTECGVRPHVKSGRIVGGKGSTFGAYPWQVLVRESTWLGLFTKNKCGGVLITSRYVITAAHCQPGFLASLVAVMGEFDISGDLESKRSVTKNVKRVIVHRQYDPATFENDLALLELDSPVQFDTHIVPICMPNDVADFTGRMATVTGWGRLKYGGGVPSVLQEVQVPIIENSVCQEMFHTAGHNKKILTSFLCAGYANGQKDSCEGDSGGPLVLQRPDGRYELAGTVSHGIKCAAPYLPGVYMRTTFYKPWLRSITGVK.

Residues 1-47 (MFKWVTPASTATLSRCTLPATTAATTTTTAMAATRTATTTTRTTRPQ) lie on the Cytoplasmic side of the membrane. A helical; Signal-anchor for type II membrane protein transmembrane segment spans residues 48-68 (LLSIALTSLIIIVASFVPTTS). Residues 69–1693 (GFRSIETNGG…PWLRSITGVK (1625 aa)) are Extracellular-facing. 4 disordered regions span residues 170-198 (QQSA…QQPS), 212-321 (QQLD…NDDF), 352-465 (GLQD…THPG), and 477-524 (STGY…TTVS). Composition is skewed to polar residues over residues 178 to 198 (FESY…QQPS) and 212 to 222 (QQLDSSSSISP). 2 stretches are compositionally biased toward low complexity: residues 230–241 (EPQQQEYQSESE) and 252–268 (TSSS…SSAS). A compositionally biased stretch (polar residues) spans 274–294 (EPSQPADASNDQTTQKINKQP). Composition is skewed to low complexity over residues 358 to 404 (SSES…PTQK), 422 to 431 (QQKPQQVAKP), and 488 to 501 (EPPK…PAEQ). Positions 502–524 (SYISSSTSAKRPTTGHNSPTTVS) are enriched in polar residues. N-linked (GlcNAc...) asparagine glycans are attached at residues Asn541 and Asn582. Disordered regions lie at residues 615–635 (QDAS…PGYG), 752–1007 (HYNP…PPAT), and 1057–1090 (YAHR…TVLI). Positions 771–799 (SVSSHTTKVQEQMDETSNGYQQSETTSGY) are enriched in polar residues. Over residues 836–847 (PRPKPSTKRPAV) the composition is skewed to basic residues. 2 stretches are compositionally biased toward polar residues: residues 951–962 (QYDQPSAPSASY) and 989–1000 (KPISTSYVTGPS). Residues Asn1215 and Asn1272 are each glycosylated (N-linked (GlcNAc...) asparagine). Low complexity-rich tracts occupy residues 1297–1307 (PVRTATTTRPK), 1331–1353 (TTTR…TTRR), and 1362–1376 (RVSS…SSAR). The tract at residues 1297-1435 (PVRTATTTRP…TPNLAFHSPS (139 aa)) is disordered. Residues 1380–1391 (DEIVDEEDEEDV) are compositionally biased toward acidic residues. The Peptidase S1 domain occupies 1449-1691 (IVGGKGSTFG…YKPWLRSITG (243 aa)). The cysteines at positions 1480 and 1496 are disulfide-linked. Residues His1495 and Asp1544 each act as charge relay system in the active site. Cystine bridges form between Cys1608–Cys1627 and Cys1638–Cys1667. The active-site Charge relay system is the Ser1642.

Belongs to the peptidase S1 family.

It is found in the cell membrane. In terms of biological role, probable endopeptidase. In tracheal terminal cells, acts downstream of ich to regulate seamless tube growth and/or maintenance probably by processing lumenal matrix proteins. The polypeptide is Serine protease filzig (Drosophila melanogaster (Fruit fly)).